A 282-amino-acid polypeptide reads, in one-letter code: MSTYLIGDVHGCYDELIALLKQVDFTPGQDTLWLTGDLVARGPGSLDVLRFVKSLGDSVRLVLGNHDLHLLAVFAGISRNKPKDRITPLLEAHDVDELINWLRRQPLLQIDEEKKLVMAHAGITPQWDLQTAKECARDVEAVLASDSYPFFLDAMYGDMPNNWSPELSGVARLRFVTNAFTRMRYCFPNGQLDMYCKDTPENAPSPLKPWFAIPGPVTNEYSVVFGHWASLEGKGTPENIYALDTGCCWGGDMTCLRWEDKAYFIQPSNRQLDLGEGEAAAS.

The protein belongs to the Ap4A hydrolase family.

It carries out the reaction P(1),P(4)-bis(5'-adenosyl) tetraphosphate + H2O = 2 ADP + 2 H(+). Its function is as follows. Hydrolyzes diadenosine 5',5'''-P1,P4-tetraphosphate to yield ADP. The sequence is that of Bis(5'-nucleosyl)-tetraphosphatase, symmetrical from Enterobacter sp. (strain 638).